A 362-amino-acid polypeptide reads, in one-letter code: Nicotinate-nucleotide--dimethylbenzimidazole phosphoribosyltransferase (362 aa).

Catalysis depends on Glu321, which acts as the Proton acceptor.

The protein belongs to the CobT family.

It catalyses the reaction 5,6-dimethylbenzimidazole + nicotinate beta-D-ribonucleotide = alpha-ribazole 5'-phosphate + nicotinate + H(+). It participates in nucleoside biosynthesis; alpha-ribazole biosynthesis; alpha-ribazole from 5,6-dimethylbenzimidazole: step 1/2. Catalyzes the synthesis of alpha-ribazole-5'-phosphate from nicotinate mononucleotide (NAMN) and 5,6-dimethylbenzimidazole (DMB). This Clostridium tetani (strain Massachusetts / E88) protein is Nicotinate-nucleotide--dimethylbenzimidazole phosphoribosyltransferase.